Here is a 306-residue protein sequence, read N- to C-terminus: Histone-lysine N-methyltransferase SETMAR (306 aa).

In terms of domain architecture, Pre-SET spans 60–123; sequence PGCACLKTPC…RCRNRVVQWG (64 aa). Zn(2+) is bound by residues C62, C64, C69, C74, C76, C105, C109, C111, and C115. One can recognise an SET domain in the interval 126–250; it reads FHLQVFKTDH…PEEELSYDYS (125 aa). S-adenosyl-L-methionine contacts are provided by residues 136 to 138, Y179, R207, and 210 to 211; these read KGW and NH. Zn(2+)-binding residues include C213, C274, C276, and C281. A Post-SET domain is found at 270 to 286; that stretch reads LRKPCYCGARSCAAFLP.

It belongs to the class V-like SAM-binding methyltransferase superfamily.

It localises to the nucleus. Its subcellular location is the chromosome. The enzyme catalyses L-lysyl(36)-[histone H3] + 2 S-adenosyl-L-methionine = N(6),N(6)-dimethyl-L-lysyl(36)-[histone H3] + 2 S-adenosyl-L-homocysteine + 2 H(+). Functionally, histone methyltransferase that methylates 'Lys-4' and 'Lys-36' of histone H3, 2 specific tags for epigenetic transcriptional activation. Specifically mediates dimethylation of H3 'Lys-36'. The protein is Histone-lysine N-methyltransferase SETMAR of Bos taurus (Bovine).